We begin with the raw amino-acid sequence, 330 residues long: Heat-inducible transcription repressor HrcA (330 aa).

The protein belongs to the HrcA family.

Its function is as follows. Negative regulator of class I heat shock genes (grpE-dnaK-dnaJ and groELS operons). Prevents heat-shock induction of these operons. In Synechococcus sp. (strain RCC307), this protein is Heat-inducible transcription repressor HrcA.